The primary structure comprises 158 residues: S-ribosylhomocysteine lyase (158 aa).

His54, His58, and Cys125 together coordinate Fe cation.

It belongs to the LuxS family. Homodimer. It depends on Fe cation as a cofactor.

The enzyme catalyses S-(5-deoxy-D-ribos-5-yl)-L-homocysteine = (S)-4,5-dihydroxypentane-2,3-dione + L-homocysteine. Functionally, involved in the synthesis of autoinducer 2 (AI-2) which is secreted by bacteria and is used to communicate both the cell density and the metabolic potential of the environment. The regulation of gene expression in response to changes in cell density is called quorum sensing. Catalyzes the transformation of S-ribosylhomocysteine (RHC) to homocysteine (HC) and 4,5-dihydroxy-2,3-pentadione (DPD). This chain is S-ribosylhomocysteine lyase, found in Lactococcus lactis subsp. cremoris (strain MG1363).